We begin with the raw amino-acid sequence, 60 residues long: Large ribosomal subunit protein bL32 (60 aa).

Residues 1–28 (MAVQQNKKSRSKRDMRRSHDALTGPTLS) are disordered. A compositionally biased stretch (basic residues) spans 7–16 (KKSRSKRDMR).

The protein belongs to the bacterial ribosomal protein bL32 family.

This is Large ribosomal subunit protein bL32 from Cellvibrio japonicus (strain Ueda107) (Pseudomonas fluorescens subsp. cellulosa).